Here is a 253-residue protein sequence, read N- to C-terminus: Major prion protein (253 aa).

The first 22 residues, 1–22 (MANLGCWMLVLFVATWSNLGLC), serve as a signal peptide directing secretion. The interaction with ADGRG6 stretch occupies residues 23-38 (KKRPKPGGWNTGGSRY). Residues 23–230 (KKRPKPGGWN…ESQAYYQRGS (208 aa)) form an interaction with GRB2, ERI3 and SYN1 region. The disordered stretch occupies residues 25 to 108 (RPKPGGWNTG…WNKPSKPKTN (84 aa)). Repeat copies occupy residues 51–59 (PQGGGGWGQ), 60–67 (PHGGGWGQ), 68–75 (PHGGGWGQ), 76–83 (PHGGGWGQ), and 84–91 (PHGGGWGQ). The 5 X 8 AA tandem repeats of P-H-G-G-G-W-G-Q stretch occupies residues 51 to 91 (PQGGGGWGQPHGGGWGQPHGGGWGQPHGGGWGQPHGGGWGQ). Residues 52–95 (QGGGGWGQPHGGGWGQPHGGGWGQPHGGGWGQPHGGGWGQGGGT) are compositionally biased toward gly residues. 12 residues coordinate Cu(2+): His61, Gly62, Gly63, His69, Gly70, Gly71, His77, Gly78, Gly79, His85, Gly86, and Gly87. Cys179 and Cys214 are joined by a disulfide. N-linked (GlcNAc...) asparagine glycosylation is found at Asn181 and Asn197. Ser230 carries GPI-anchor amidated serine lipidation. Residues 231–253 (SMVLFSSPPVILLISFLIFLIVG) constitute a propeptide, removed in mature form.

This sequence belongs to the prion family. As to quaternary structure, monomer and homodimer. Has a tendency to aggregate into amyloid fibrils containing a cross-beta spine, formed by a steric zipper of superposed beta-strands. Soluble oligomers may represent an intermediate stage on the path to fibril formation. Copper binding may promote oligomerization. Interacts with GRB2, APP, ERI3/PRNPIP and SYN1. Mislocalized cytosolically exposed PrP interacts with MGRN1; this interaction alters MGRN1 subcellular location and causes lysosomal enlargement. Interacts with APP. Interacts with KIAA1191. Interacts with ADGRG6.

The protein localises to the cell membrane. Its subcellular location is the golgi apparatus. In terms of biological role, its primary physiological function is unclear. May play a role in neuronal development and synaptic plasticity. May be required for neuronal myelin sheath maintenance. May promote myelin homeostasis through acting as an agonist for ADGRG6 receptor. May play a role in iron uptake and iron homeostasis. Soluble oligomers are toxic to cultured neuroblastoma cells and induce apoptosis (in vitro). Association with GPC1 (via its heparan sulfate chains) targets PRNP to lipid rafts. Also provides Cu(2+) or Zn(2+) for the ascorbate-mediated GPC1 deaminase degradation of its heparan sulfate side chains. This Pongo pygmaeus (Bornean orangutan) protein is Major prion protein (PRNP).